The following is a 962-amino-acid chain: Leucine--tRNA ligase (962 aa).

The 'HIGH' region signature appears at 40-51 (PYPSGAGLHVGH). The disordered stretch occupies residues 548–570 (SRKLSGQHDEPNSNVTPSAVEGS). Residues 737 to 741 (KMSKS) carry the 'KMSKS' region motif. Lys740 is an ATP binding site.

Belongs to the class-I aminoacyl-tRNA synthetase family.

The protein localises to the cytoplasm. The catalysed reaction is tRNA(Leu) + L-leucine + ATP = L-leucyl-tRNA(Leu) + AMP + diphosphate. This chain is Leucine--tRNA ligase, found in Christiangramia forsetii (strain DSM 17595 / CGMCC 1.15422 / KT0803) (Gramella forsetii).